A 119-amino-acid polypeptide reads, in one-letter code: Large ribosomal subunit protein uL18 (119 aa).

The protein belongs to the universal ribosomal protein uL18 family. Part of the 50S ribosomal subunit; part of the 5S rRNA/L5/L18/L25 subcomplex. Contacts the 5S and 23S rRNAs.

Its function is as follows. This is one of the proteins that bind and probably mediate the attachment of the 5S RNA into the large ribosomal subunit, where it forms part of the central protuberance. The polypeptide is Large ribosomal subunit protein uL18 (Clostridium botulinum (strain Langeland / NCTC 10281 / Type F)).